The sequence spans 467 residues: UDP-N-acetylmuramate--L-alanine ligase (467 aa).

114-120 (GTHGKTT) provides a ligand contact to ATP.

Belongs to the MurCDEF family.

It is found in the cytoplasm. It catalyses the reaction UDP-N-acetyl-alpha-D-muramate + L-alanine + ATP = UDP-N-acetyl-alpha-D-muramoyl-L-alanine + ADP + phosphate + H(+). The protein operates within cell wall biogenesis; peptidoglycan biosynthesis. Functionally, cell wall formation. The chain is UDP-N-acetylmuramate--L-alanine ligase from Bradyrhizobium sp. (strain ORS 278).